The chain runs to 302 residues: Methionyl-tRNA formyltransferase (302 aa).

106–109 serves as a coordination point for (6S)-5,6,7,8-tetrahydrofolate; that stretch reads SVLP.

The protein belongs to the Fmt family.

The catalysed reaction is L-methionyl-tRNA(fMet) + (6R)-10-formyltetrahydrofolate = N-formyl-L-methionyl-tRNA(fMet) + (6S)-5,6,7,8-tetrahydrofolate + H(+). Attaches a formyl group to the free amino group of methionyl-tRNA(fMet). The formyl group appears to play a dual role in the initiator identity of N-formylmethionyl-tRNA by promoting its recognition by IF2 and preventing the misappropriation of this tRNA by the elongation apparatus. This is Methionyl-tRNA formyltransferase from Hydrogenobaculum sp. (strain Y04AAS1).